The primary structure comprises 526 residues: GMP synthase [glutamine-hydrolyzing] (526 aa).

The Glutamine amidotransferase type-1 domain maps to 3 to 199 (KVAIIDFGSQ…FIKIAGCKTD (197 aa)). C83 acts as the Nucleophile in catalysis. Catalysis depends on residues H174 and E176. In terms of domain architecture, GMPS ATP-PPase spans 200-392 (WTMNSFLDEQ…LGISDEILMR (193 aa)). An ATP-binding site is contributed by 227–233 (SGGVDSS).

As to quaternary structure, homodimer.

The catalysed reaction is XMP + L-glutamine + ATP + H2O = GMP + L-glutamate + AMP + diphosphate + 2 H(+). It functions in the pathway purine metabolism; GMP biosynthesis; GMP from XMP (L-Gln route): step 1/1. Catalyzes the synthesis of GMP from XMP. The protein is GMP synthase [glutamine-hydrolyzing] of Ehrlichia canis (strain Jake).